The following is a 181-amino-acid chain: Large ribosomal subunit protein uL5 (181 aa).

The protein belongs to the universal ribosomal protein uL5 family. In terms of assembly, part of the 50S ribosomal subunit; contacts the 5S rRNA and probably tRNA. Forms a bridge to the 30S subunit in the 70S ribosome.

Its function is as follows. This is one of the proteins that bind and probably mediate the attachment of the 5S RNA into the large ribosomal subunit, where it forms part of the central protuberance. In the 70S ribosome it contacts protein S13 of the 30S subunit (bridge B1b), connecting the 2 subunits; this bridge is implicated in subunit movement. May contact the P site tRNA; the 5S rRNA and some of its associated proteins might help stabilize positioning of ribosome-bound tRNAs. This chain is Large ribosomal subunit protein uL5, found in Methanococcus maripaludis (strain C6 / ATCC BAA-1332).